A 307-amino-acid polypeptide reads, in one-letter code: NAD kinase (307 aa).

Asp-80 functions as the Proton acceptor in the catalytic mechanism. Residues 80 to 81 (DG), His-85, 154 to 155 (ND), His-165, His-182, Asp-184, 195 to 200 (TAYALS), and Gln-254 each bind NAD(+).

The protein belongs to the NAD kinase family. It depends on a divalent metal cation as a cofactor.

The protein resides in the cytoplasm. It catalyses the reaction NAD(+) + ATP = ADP + NADP(+) + H(+). Functionally, involved in the regulation of the intracellular balance of NAD and NADP, and is a key enzyme in the biosynthesis of NADP. Catalyzes specifically the phosphorylation on 2'-hydroxyl of the adenosine moiety of NAD to yield NADP. The protein is NAD kinase of Acinetobacter baylyi (strain ATCC 33305 / BD413 / ADP1).